The sequence spans 504 residues: WD repeat-containing protein 55 homolog (504 aa).

Disordered stretches follow at residues 1–21 and 33–132; these read MDRHEHFKAPANEDELDDIDD and QEVL…DDDD. Acidic residues-rich tracts occupy residues 12 to 21 and 33 to 48; these read NEDELDDIDD and QEVLNESESDDDEYDL. Residues 63-74 are compositionally biased toward low complexity; the sequence is SSSNESISSDGS. Residues 78-89 are compositionally biased toward acidic residues; the sequence is NAEDSDSDDSMI. 6 WD repeats span residues 156–195, 200–239, 243–281, 284–323, 326–365, and 410–449; these read KLEDFITDICFHPDRDIIALATIIGDVHLYEYGNEENKLL, VHAKACRDVEFTEDGRSLITCSKDKCVMVTDMETEKLKKL, AHDDAINKLHVLDERLFATGDDAGTVKLWDFRTKDAIFE, EVEDQITQMLTNEQNKLLLATSADGYLTTYNIGARKLYVQ, PYEEELNCMGIYRGSSKLVAGTSKGRLYTYNWGYFGYHCD, and QHNMPIESLDINCSGELLASSSHNNDVRFWNVKYFEDFGD. Positions 477 to 504 are disordered; sequence FFADMTKDQDDDDNDGGNDTAAGPSNVT.

The protein belongs to the WD repeat WDR55 family.

This chain is WD repeat-containing protein 55 homolog, found in Drosophila virilis (Fruit fly).